The following is a 407-amino-acid chain: S-adenosylmethionine synthase (407 aa).

ATP is bound at residue histidine 19. Aspartate 21 is a binding site for Mg(2+). Glutamate 47 provides a ligand contact to K(+). 2 residues coordinate L-methionine: glutamate 60 and glutamine 103. The segment at 103–113 is flexible loop; the sequence is QSQEIADGVDT. The tract at residues 108–131 is disordered; that stretch reads ADGVDTSQEARGDGHFEEDDRAGA. ATP-binding positions include 178-180, aspartate 258, 264-265, alanine 281, and lysine 285; these read DGK and RK. Residue aspartate 258 coordinates L-methionine. An L-methionine-binding site is contributed by lysine 289.

This sequence belongs to the AdoMet synthase family. Homotetramer; dimer of dimers. The cofactor is Mg(2+). Requires K(+) as cofactor.

Its subcellular location is the cytoplasm. The catalysed reaction is L-methionine + ATP + H2O = S-adenosyl-L-methionine + phosphate + diphosphate. It functions in the pathway amino-acid biosynthesis; S-adenosyl-L-methionine biosynthesis; S-adenosyl-L-methionine from L-methionine: step 1/1. In terms of biological role, catalyzes the formation of S-adenosylmethionine (AdoMet) from methionine and ATP. The overall synthetic reaction is composed of two sequential steps, AdoMet formation and the subsequent tripolyphosphate hydrolysis which occurs prior to release of AdoMet from the enzyme. The polypeptide is S-adenosylmethionine synthase (Corynebacterium efficiens (strain DSM 44549 / YS-314 / AJ 12310 / JCM 11189 / NBRC 100395)).